We begin with the raw amino-acid sequence, 226 residues long: UPF0758 protein Sca_1264 (226 aa).

The MPN domain maps to 102–224 (KITSPQDAAD…YLSMVEGGYF (123 aa)). Zn(2+) is bound by residues histidine 173, histidine 175, and aspartate 186. Positions 173-186 (HNHPSGDVTPSKED) match the JAMM motif motif.

This sequence belongs to the UPF0758 family.

This chain is UPF0758 protein Sca_1264, found in Staphylococcus carnosus (strain TM300).